We begin with the raw amino-acid sequence, 910 residues long: Putative coatomer subunit beta'-3 (910 aa).

9 WD repeats span residues 13 to 52 (QRSE…MVKS), 55 to 94 (VTEL…KVKV), 97 to 136 (AHTD…MCTQ), 140 to 180 (GHSH…PNFT), 183 to 224 (GHSK…CVQT), 227 to 266 (GHAH…LENT), 269 to 309 (YGLE…ASMD), 351 to 393 (TCDL…GSAL), and 461 to 501 (RIDV…SHLD). Acidic residues predominate over residues 865 to 884 (ENGVEESQEDAVEVDVEADG). The segment at 865 to 910 (ENGVEESQEDAVEVDVEADGSTDGTVLVNGNDTEEQWGTNNEESLA) is disordered. Residues 886-910 (TDGTVLVNGNDTEEQWGTNNEESLA) are compositionally biased toward polar residues.

It belongs to the WD repeat COPB2 family. In terms of assembly, oligomeric complex that consists of at least the alpha, beta, beta', gamma, delta, epsilon and zeta subunits.

Its subcellular location is the cytoplasm. It localises to the golgi apparatus membrane. The protein localises to the cytoplasmic vesicle. It is found in the COPI-coated vesicle membrane. Functionally, the coatomer is a cytosolic protein complex that binds to dilysine motifs and reversibly associates with Golgi non-clathrin-coated vesicles, which further mediate biosynthetic protein transport from the ER, via the Golgi up to the trans Golgi network. Coatomer complex is required for budding from Golgi membranes, and is essential for the retrograde Golgi-to-ER transport of dilysine-tagged proteins. The sequence is that of Putative coatomer subunit beta'-3 from Oryza sativa subsp. japonica (Rice).